The chain runs to 338 residues: Malate dehydrogenase, mitochondrial (338 aa).

The N-terminal 24 residues, 1–24, are a transit peptide targeting the mitochondrion; sequence MLSALARPAGAALRRSFSTSAQNN. Residues 31-37 and Asp57 contribute to the NAD(+) site; that span reads GASGGIG. Ser33 carries O-linked (GlcNAc) serine glycosylation. N6-acetyllysine; alternate is present on residues Lys78 and Lys91. Residues Lys78 and Lys91 each carry the N6-succinyllysine; alternate modification. 2 residues coordinate substrate: Arg104 and Arg110. NAD(+) contacts are provided by residues Asn117 and 140–142; that span reads IAN. Asn142 contacts substrate. Lys165 bears the N6-acetyllysine mark. Arg176 is a substrate binding site. The residue at position 185 (Lys185) is an N6-acetyllysine; alternate. Lys185 carries the post-translational modification N6-succinyllysine; alternate. His200 acts as the Proton acceptor in catalysis. Lys203 carries the post-translational modification N6-succinyllysine. Residues Lys215 and Lys239 each carry the N6-acetyllysine; alternate modification. N6-succinyllysine; alternate is present on residues Lys215 and Lys239. Lys239 is modified (N6-malonyllysine; alternate). Residue Ser246 is modified to Phosphoserine. Residue Met251 coordinates NAD(+). Lys269 carries the post-translational modification N6-succinyllysine. 3 positions are modified to N6-acetyllysine; alternate: Lys296, Lys301, and Lys307. Residues Lys296, Lys301, and Lys307 each carry the N6-succinyllysine; alternate modification. Position 307 is an N6-malonyllysine; alternate (Lys307). Position 309 is a phosphothreonine (Thr309). Lys314 and Lys324 each carry N6-acetyllysine; alternate. 2 positions are modified to N6-succinyllysine; alternate: Lys314 and Lys324. Position 326 is a phosphoserine (Ser326). Lys328, Lys329, and Lys335 each carry N6-acetyllysine; alternate. Residue Lys328 is modified to N6-succinyllysine; alternate. Lys329 carries the post-translational modification N6-malonyllysine; alternate. The residue at position 335 (Lys335) is an N6-succinyllysine; alternate.

This sequence belongs to the LDH/MDH superfamily. MDH type 1 family. As to quaternary structure, homodimer. Acetylation is enhanced after treatment either with trichostin A (TCA) or with nicotinamide (NAM) with the appearance of tri- and tetraacetylations. Glucose also increases acetylation. Acetylation of Lys-239 and Lys-314 is observed in liver mitochondria from fasted mice but not from fed mice.

It is found in the mitochondrion matrix. It catalyses the reaction (S)-malate + NAD(+) = oxaloacetate + NADH + H(+). With respect to regulation, enzyme activity is enhanced by acetylation. This chain is Malate dehydrogenase, mitochondrial (Mdh2), found in Mus musculus (Mouse).